We begin with the raw amino-acid sequence, 638 residues long: Voltage-gated potassium channel KCNC2 (638 aa).

At 1–229 the chain is on the cytoplasmic side; the sequence is MGKIENNERV…EDPYSSRAAR (229 aa). A disordered region spans residues 47–75; the sequence is LTAAGDKLQPLPPPLSPPPRPPPLSPVPS. The segment covering 56–72 has biased composition (pro residues); sequence PLPPPLSPPPRPPPLSP. 4 residues coordinate Zn(2+): histidine 124, cysteine 130, cysteine 151, and cysteine 152. A helical membrane pass occupies residues 230–248; the sequence is FIAFASLFFILVSITTFCL. Residues asparagine 259 and asparagine 266 are each glycosylated (N-linked (GlcNAc...) asparagine). Residues 284–303 form a helical membrane-spanning segment; it reads YVEGVCVVWFTFEFLVRIVF. Residues 304–314 lie on the Cytoplasmic side of the membrane; that stretch reads SPNKLEFIKNL. Residues 315–337 traverse the membrane as a helical segment; that stretch reads LNIIDFVAILPFYLEVGLSGLSS. A helical; Voltage-sensor transmembrane segment spans residues 346–368; sequence FLRVVRFVRILRIFKLTRHFVGL. Residues 369–381 lie on the Cytoplasmic side of the membrane; the sequence is RVLGHTLRASTNE. A helical transmembrane segment spans residues 382–401; that stretch reads FLLLIIFLALGVLIFATMIY. Residues threonine 437, leucine 438, glycine 439, and tyrosine 440 each contribute to the K(+) site. The Selectivity filter motif lies at 437–442; the sequence is TLGYGD. The chain crosses the membrane as a helical span at residues 451-473; that stretch reads MLVGALCALAGVLTIAMPVPVIV. The Cytoplasmic segment spans residues 474 to 638; that stretch reads NNFGMYYSLA…RSRSPIPSIL (165 aa). The segment at 538–572 is disordered; that stretch reads SVLSGDDSTGSEPPLSPPERLPIRRSSTRDKNRRG. The residue at position 564 (serine 564) is a Phosphoserine; by PKA. Serine 600 carries the phosphoserine modification.

Belongs to the potassium channel family. C (Shaw) (TC 1.A.1.2) subfamily. Kv3.2/KCNC2 sub-subfamily. Homotetramer and heterotetramer with other channel-forming alpha subunits, such as KCNC1. Interacts with KCNC1. Homotetramer or heterotetramer channel activity is regulated by association with modulating ancillary subunits such as KCNE1, KCNE2 and KCNE3, creating a functionally diverse range of channel complexes. Interacts with KCNE1, KCNE2 and KCNE3. In terms of processing, phosphorylated by PKA in cortical synaptosomes. cAMP-dependent phosphorylation inhibits channel activity. Histamine H2 receptor- and PKA-induced phosphorylation extends action potential spike duration, reduces action potential spike amplitude, sustains maximum firing frequency in hippocampal interneurons; also reduces the incidence of high-frequency oscillations in hippocampal CA3 pyramidal cell layers. Expressed in neurons of the visual cortex during postnatal development. Expressed in neurons of the globus pallidus at postnatal age day 7 (P7), onward. Expressed in thalamic relay neurons. Expressed in neurons in layer IV and deeper cortical layers of the neocortex. Expressed in hippocampal interneurons. Expressed in nonpyramidal interneurons in the basolateral amygdala. Expressed in retinal ganglion cells (at protein level). Widely expressed in the brain. Expressed in numerous thalamic relay neurons throughout the dorsal thalamus. Expressed in interneurons of the deep layers V-VI of the cerebral cortex, the CA1 and CA3 pyramidal and dentate gyrus (DG) granule cells of the hippocampus, in neurons of the caudate-putamen, globus pallidus and subthalamic nucleus. Also expressed in the optic layer of interior colliculus, the inferior colliculus, the red nucleus, the medial geniculate, the ventral lateral lemiscus, the reticulotegmental nucleus and in the deep cerebellar nuclei. Expressed in globus pallidus (GP) neurons.

It localises to the cell membrane. It is found in the membrane. The protein localises to the perikaryon. The protein resides in the cell projection. Its subcellular location is the axon. It localises to the synapse. It is found in the synaptosome. The protein localises to the dendrite. The protein resides in the postsynaptic cell membrane. Its subcellular location is the presynaptic cell membrane. It localises to the apical cell membrane. It is found in the basolateral cell membrane. The catalysed reaction is K(+)(in) = K(+)(out). Its activity is regulated as follows. Inhibited by Stichodactyla helianthus peptide ShK. Inhibited by millimolar levels of tetraethylammonium (TEA). Contrary to other channels, inhibited only by millimolar levels of 4-aminopyridine (4-AP). Its function is as follows. Voltage-gated potassium channel that mediates transmembrane potassium transport in excitable membranes, primarily in the brain. Contributes to the regulation of the fast action potential repolarization and in sustained high-frequency firing in neurons of the central nervous system. Homotetramer channels mediate delayed-rectifier voltage-dependent potassium currents that activate rapidly at high-threshold voltages and inactivate slowly. Forms tetrameric channels through which potassium ions pass in accordance with their electrochemical gradient. The channel alternates between opened and closed conformations in response to the voltage difference across the membrane. Can form functional homotetrameric channels and heterotetrameric channels that contain variable proportions of KCNC1, and possibly other family members as well; channel properties depend on the type of alpha subunits that are part of the channel. Channel properties may be modulated either by the association with ancillary subunits, such as KCNE1, KCNE2 and KCNE3 or indirectly by nitric oxide (NO) through a cGMP- and PKG-mediated signaling cascade, slowing channel activation and deactivation of delayed rectifier potassium channels. Contributes to fire sustained trains of very brief action potentials at high frequency in retinal ganglion cells, thalamocortical and suprachiasmatic nucleus (SCN) neurons and in hippocampal and neocortical interneurons. Sustained maximal action potential firing frequency in inhibitory hippocampal interneurons is negatively modulated by histamine H2 receptor activation in a cAMP- and protein kinase (PKA) phosphorylation-dependent manner. Plays a role in maintaining the fidelity of synaptic transmission in neocortical GABAergic interneurons by generating action potential (AP) repolarization at nerve terminals, thus reducing spike-evoked calcium influx and GABA neurotransmitter release. Required for long-range synchronization of gamma oscillations over distance in the neocortex. Contributes to the modulation of the circadian rhythm of spontaneous action potential firing in suprachiasmatic nucleus (SCN) neurons in a light-dependent manner. This chain is Voltage-gated potassium channel KCNC2, found in Rattus norvegicus (Rat).